The primary structure comprises 206 residues: Ribosomal RNA large subunit methyltransferase E (206 aa).

S-adenosyl-L-methionine contacts are provided by Gly-61, Trp-63, Asp-81, Asp-97, and Asp-122. The active-site Proton acceptor is Lys-162.

The protein belongs to the class I-like SAM-binding methyltransferase superfamily. RNA methyltransferase RlmE family.

It localises to the cytoplasm. The catalysed reaction is uridine(2552) in 23S rRNA + S-adenosyl-L-methionine = 2'-O-methyluridine(2552) in 23S rRNA + S-adenosyl-L-homocysteine + H(+). Specifically methylates the uridine in position 2552 of 23S rRNA at the 2'-O position of the ribose in the fully assembled 50S ribosomal subunit. The polypeptide is Ribosomal RNA large subunit methyltransferase E (Neisseria gonorrhoeae (strain NCCP11945)).